The sequence spans 1006 residues: MAEQESLEFGKADFVLMDTVSMPEFMANLRLRFEKGRIYTFIGEVVVSVNPYKSLNIYGRDTIEQYKGRELYERPPHLFAIADAAYKAMKRRSKDTCIVISGESGAGKTEASKYIMQYIAAITNPSQRAEIERVKNMLLKSNCVLEAFGNAKTNRNDNSSRFGKYMDINFDFKGDPIGGHINNYLLEKSRVIVQQPGERSFHSFYQLLQGGSDQMLRSLHLQKSLSSYSYIHVGAQLKSSINDAAEFKVVADAMKVIGFKPEEIQTAYKILAAILHLGNLKFVVDGDTTLIEDGKLVSIIAELLSTKTDMVEKALLYRTVATGRDVIDKQHTEQEASYGRDAFAKAIYERLFCWIVSRINDIIAVKNSDTTIHGKNTVIGVLDIYGFEIFDNNSFEQFCINYCNEKLQQLFIQLVLKQEQEEYQREGIPWKHIDYFNNQIIVDLVEQQHKGIIAILDDACMNVGKVTDEMFLEALNSKLGKHGHFSSRKLCASDKILEFDRDFRIRHYAGDVVYSVVGFIDKNKDTLFQDFKRLMYNSSNPVLKNMWPEGKLSITEVTRRPLTAATLFKNSMIALVDNLASKEPYYVRCIKPNDMKSPQIFDDERCRHQVEYLGLLENVRVRRAGFAFRQTYEKFLHRYKMISEFTWPNHDLPSDKEAVKKLVEYCGFQDDVAYGKTKIFIRTPRTLFTLEELRAQMLVRIVLFLQKVWRGTLARMRYKRTKAALTIIRYYRRYKVKSYIHEVARRFHGIKTMRDYGKHVQWPTPPKVLHRFEEVLQAVFNRWRASQLIKTIPASDLPQVRAKVAAVEMLKGQRADLGLQRAWEGNYLASKPDTPQTSGTFVPVANELKRKDKYMNVLFSCHVRKVNRFSKVEDRAIFVTDRHLYKMDPTKQYKVMKTIPLYNLTGLSVSNGKDQLVVFHTKDNKDLIVCLFSKQPTHESRIGELVGVLVNHFKSEKRHLQVNVTNPVQCSLHGKKCTVSVETRLNQPQPDFTKNRSGFILSVPGN.

Ala2 carries the post-translational modification N-acetylalanine. The Myosin motor domain maps to 9 to 695 (FGKADFVLMD…TLFTLEELRA (687 aa)). Position 102 to 109 (102 to 109 (GESGAGKT)) interacts with ATP. Ser200 carries the post-translational modification Phosphoserine. Phosphotyrosine is present on Tyr536. Residues 572 to 594 (MIALVDNLASKEPYYVRCIKPND) form an actin-binding region. 2 consecutive IQ domains span residues 699-719 (VRIVLFLQKVWRGTLARMRYK) and 721-741 (TKAALTIIRYYRRYKVKSYIH). The TH1 domain occupies 812 to 1005 (GQRADLGLQR…RSGFILSVPG (194 aa)).

It belongs to the TRAFAC class myosin-kinesin ATPase superfamily. Myosin family. As to quaternary structure, interacts (via the two IQ motifs) with calmodulin. Binds an additional calmodulin chain via a third, C-terminal region. Interacts with F-actin.

It is found in the cytoplasm. The protein resides in the perikaryon. The protein localises to the cell projection. Its subcellular location is the dendrite. It localises to the early endosome. It is found in the cell cortex. Functionally, unconventional myosin that functions as actin-based motor protein with ATPase activity. Plays a role in endosomal protein trafficking, and especially in the transfer of cargo proteins from early to recycling endosomes. Required for normal planar cell polarity in ciliated tracheal cells, for normal rotational polarity of cilia, and for coordinated, unidirectional ciliary movement in the trachea. Required for normal, polarized cilia organization in brain ependymal epithelial cells. The protein is Unconventional myosin-Id (MYO1D) of Bos taurus (Bovine).